The primary structure comprises 248 residues: MSFPYFISPEQAMRERSELARKGIARAKSVVALAYAGGVLFVAENPSRSLQKISELYDRVGFAAAGKFNEFDNLRRGGIQFADTRGYAYDRRDVTGRQLANVYAQTLGTIFTEQAKPYEVELCVAEVAHYGETKRPELYRITYDGSIADEPHFVVMGGTTEPIANALKESYAENASLTDALRIAVAALRAGSADTSGGDQPTLGVASLEVAVLDANRPRRAFRRITGSALQALLVDQESPQSDGESSG.

This sequence belongs to the peptidase T1A family. The 20S proteasome core is composed of 14 alpha and 14 beta subunits that assemble into four stacked heptameric rings, resulting in a barrel-shaped structure. The two inner rings, each composed of seven catalytic beta subunits, are sandwiched by two outer rings, each composed of seven alpha subunits. The catalytic chamber with the active sites is on the inside of the barrel. Has a gated structure, the ends of the cylinder being occluded by the N-termini of the alpha-subunits. Is capped by the proteasome-associated ATPase, ARC.

Its subcellular location is the cytoplasm. It participates in protein degradation; proteasomal Pup-dependent pathway. The formation of the proteasomal ATPase ARC-20S proteasome complex, likely via the docking of the C-termini of ARC into the intersubunit pockets in the alpha-rings, may trigger opening of the gate for substrate entry. Interconversion between the open-gate and close-gate conformations leads to a dynamic regulation of the 20S proteasome proteolysis activity. Its function is as follows. Component of the proteasome core, a large protease complex with broad specificity involved in protein degradation. The sequence is that of Proteasome subunit alpha from Mycobacterium tuberculosis (strain ATCC 25177 / H37Ra).